We begin with the raw amino-acid sequence, 308 residues long: Elongation factor Ts (308 aa).

Positions 80–83 are involved in Mg(2+) ion dislocation from EF-Tu; sequence TDFV.

The protein belongs to the EF-Ts family.

Its subcellular location is the cytoplasm. Functionally, associates with the EF-Tu.GDP complex and induces the exchange of GDP to GTP. It remains bound to the aminoacyl-tRNA.EF-Tu.GTP complex up to the GTP hydrolysis stage on the ribosome. The protein is Elongation factor Ts of Allorhizobium ampelinum (strain ATCC BAA-846 / DSM 112012 / S4) (Agrobacterium vitis (strain S4)).